A 123-amino-acid polypeptide reads, in one-letter code: Large ribosomal subunit protein uL14 (123 aa).

Belongs to the universal ribosomal protein uL14 family. In terms of assembly, part of the 50S ribosomal subunit. Forms a cluster with proteins L3 and L19. In the 70S ribosome, L14 and L19 interact and together make contacts with the 16S rRNA in bridges B5 and B8.

Functionally, binds to 23S rRNA. Forms part of two intersubunit bridges in the 70S ribosome. This chain is Large ribosomal subunit protein uL14, found in Wigglesworthia glossinidia brevipalpis.